A 720-amino-acid chain; its full sequence is Engulfment and cell motility protein 3 (720 aa).

An ELMO domain is found at 307–479; the sequence is EQREQLQALR…VVREQLARTL (173 aa). The PH domain occupies 541–663; the sequence is LRLCEGMLFR…WTDGLSALLG (123 aa).

Probably interacts directly with the SH3-domain of DOCK1 via its SH3-binding site. Part of a complex with DOCK1 and RAC1. Interacts with ADGRB3.

It is found in the cytoplasm. Involved in cytoskeletal rearrangements required for phagocytosis of apoptotic cells and cell motility. Acts in association with DOCK1 and CRK. Was initially proposed to be required in complex with DOCK1 to activate Rac Rho small GTPases. May enhance the guanine nucleotide exchange factor (GEF) activity of DOCK1. This Rattus norvegicus (Rat) protein is Engulfment and cell motility protein 3 (Elmo3).